Consider the following 235-residue polypeptide: Small ribosomal subunit protein uS3 (235 aa).

In terms of domain architecture, KH type-2 spans 39–107; that stretch reads VRQFLNKELA…PAQINIAEVK (69 aa). The interval 216–235 is disordered; it reads QPEQQPTDKPKKVPRGKGRK.

This sequence belongs to the universal ribosomal protein uS3 family. In terms of assembly, part of the 30S ribosomal subunit. Forms a tight complex with proteins S10 and S14.

In terms of biological role, binds the lower part of the 30S subunit head. Binds mRNA in the 70S ribosome, positioning it for translation. This Aggregatibacter actinomycetemcomitans (Actinobacillus actinomycetemcomitans) protein is Small ribosomal subunit protein uS3.